The following is a 755-amino-acid chain: Subtilisin-like protease 4 (755 aa).

A signal peptide spans 1-20 (MDYFLFIALTFLLTFHVHNA). The Inhibitor I9 domain maps to 41 to 119 (YIIHVTGPEG…ISAHPQRVLH (79 aa)). In terms of domain architecture, Peptidase S8 spans 128-611 (FLGLQQDTGV…SGHVNPSRAN (484 aa)). The Charge relay system role is filled by Asp-153. A glycan (N-linked (GlcNAc...) asparagine) is linked at Asn-182. His-217 functions as the Charge relay system in the catalytic mechanism. Asn-297, Asn-325, Asn-393, Asn-468, and Asn-529 each carry an N-linked (GlcNAc...) asparagine glycan. Residues 376–461 (PLAYAGKNGK…ATHVSYAAGI (86 aa)) form the PA domain. Ser-544 serves as the catalytic Charge relay system. 2 N-linked (GlcNAc...) asparagine glycosylation sites follow: Asn-706 and Asn-727.

This sequence belongs to the peptidase S8 family.

Its subcellular location is the secreted. The protein resides in the extracellular space. The protein localises to the apoplast. Required for arbuscular mycorrhiza (AM) development during AM symbiosis with AM fungi (e.g. Glomeromycota intraradices). This Lotus japonicus (Lotus corniculatus var. japonicus) protein is Subtilisin-like protease 4.